Reading from the N-terminus, the 252-residue chain is MLTKRIIPCLDVDHGRVVKGTNFLNLRDAGDPVELAAAYDREGADELVFLDISASVEGRDIMIDVARRTAAQVFIPFTVGGGLRSLEDIRAMLAAGADKISLNTAAVLDPDLVATAARRFGSQCVVVAIDARRTGPGRWEVYTHGGRRPTGRDAVAWARQVEELGAGEILLTSMDCDGTLDGYDLELTATVSQAVNIPVIASGGVGKLEHLYEGLTAGRADAVLAASIFHFGTYTIKEAKDYLAARGVPVRL.

Catalysis depends on residues D11 and D130.

It belongs to the HisA/HisF family. Heterodimer of HisH and HisF.

It localises to the cytoplasm. It catalyses the reaction 5-[(5-phospho-1-deoxy-D-ribulos-1-ylimino)methylamino]-1-(5-phospho-beta-D-ribosyl)imidazole-4-carboxamide + L-glutamine = D-erythro-1-(imidazol-4-yl)glycerol 3-phosphate + 5-amino-1-(5-phospho-beta-D-ribosyl)imidazole-4-carboxamide + L-glutamate + H(+). It functions in the pathway amino-acid biosynthesis; L-histidine biosynthesis; L-histidine from 5-phospho-alpha-D-ribose 1-diphosphate: step 5/9. IGPS catalyzes the conversion of PRFAR and glutamine to IGP, AICAR and glutamate. The HisF subunit catalyzes the cyclization activity that produces IGP and AICAR from PRFAR using the ammonia provided by the HisH subunit. This chain is Imidazole glycerol phosphate synthase subunit HisF, found in Moorella thermoacetica (strain ATCC 39073 / JCM 9320).